The sequence spans 346 residues: Cyclin-dependent kinase 7 (346 aa).

At Ala-2 the chain carries N-acetylalanine. A Phosphoserine modification is found at Ser-7. The Protein kinase domain occupies 12-295 (YEKLDFLGEG…ATQALKMKYF (284 aa)). ATP is bound by residues 18–26 (LGEGQFATV) and Lys-41. Asp-137 functions as the Proton acceptor in the catalytic mechanism. Phosphoserine; by CDK1 and CDK2 is present on Ser-164. Phosphothreonine; by CDK2 is present on Thr-170. A Phosphoserine modification is found at Ser-321.

Belongs to the protein kinase superfamily. CMGC Ser/Thr protein kinase family. CDC2/CDKX subfamily. In terms of assembly, associates primarily with cyclin-H (CCNH) and MAT1 to form the CAK complex. CAK can further associate with the core-TFIIH to form the TFIIH basal transcription factor; this complex is sensitive to UV light. The CAK complex binds to p53/TP53 in response to DNA damage. Interacts with CDK2, SF1/NR5A1, PUF60 and PRKCI. Interacts with HINT1. Post-translationally, phosphorylation of Ser-164 during mitosis inactivates the enzyme. Phosphorylation of Thr-170 is required for activity. Phosphorylated at Ser-164 and Thr-170 by CDK2. Ubiquitous.

Its subcellular location is the nucleus. The protein localises to the cytoplasm. It is found in the perinuclear region. It carries out the reaction L-seryl-[protein] + ATP = O-phospho-L-seryl-[protein] + ADP + H(+). The enzyme catalyses L-threonyl-[protein] + ATP = O-phospho-L-threonyl-[protein] + ADP + H(+). The catalysed reaction is [DNA-directed RNA polymerase] + ATP = phospho-[DNA-directed RNA polymerase] + ADP + H(+). Inactivated by phosphorylation. Repressed by roscovitine (seliciclib, CYC202), R547 (Ro-4584820) and SNS-032 (BMS-387032). The association of p53/TP53 to the CAK complex in response to DNA damage reduces kinase activity toward CDK2 and RNA polymerase II repetitive C-terminal domain (CTD), thus stopping cell cycle progression. The inactivation by roscovitine promotes caspase-mediated apoptosis in leukemic cells. Specifically inactivated by THZ1. In terms of biological role, serine/threonine kinase involved in cell cycle control and in RNA polymerase II-mediated RNA transcription. Cyclin-dependent kinases (CDKs) are activated by the binding to a cyclin and mediate the progression through the cell cycle. Each different complex controls a specific transition between 2 subsequent phases in the cell cycle. Required for both activation and complex formation of CDK1/cyclin-B during G2-M transition, and for activation of CDK2/cyclins during G1-S transition (but not complex formation). CDK7 is the catalytic subunit of the CDK-activating kinase (CAK) complex. Phosphorylates SPT5/SUPT5H, SF1/NR5A1, POLR2A, p53/TP53, CDK1, CDK2, CDK4, CDK6 and CDK11B/CDK11. Initiates transcription by RNA polymerase II by mediating phosphorylation of POLR2A at 'Ser-5' of the repetitive C-terminal domain (CTD) when POLR2A is in complex with DNA, promoting dissociation from DNA and initiation. CAK activates the cyclin-associated kinases CDK1, CDK2, CDK4 and CDK6 by threonine phosphorylation, thus regulating cell cycle progression. CAK complexed to the core-TFIIH basal transcription factor activates RNA polymerase II by serine phosphorylation of the CTD of POLR2A, allowing its escape from the promoter and elongation of the transcripts. Its expression and activity are constant throughout the cell cycle. Upon DNA damage, triggers p53/TP53 activation by phosphorylation, but is inactivated in turn by p53/TP53; this feedback loop may lead to an arrest of the cell cycle and of the transcription, helping in cell recovery, or to apoptosis. Required for DNA-bound peptides-mediated transcription and cellular growth inhibition. This is Cyclin-dependent kinase 7 (CDK7) from Homo sapiens (Human).